Consider the following 650-residue polypeptide: Macrolide export ATP-binding/permease protein MacB (650 aa).

In terms of domain architecture, ABC transporter spans 2–238; it reads IDIKGIRKSY…PTTAQEKRQE (237 aa). 38–45 contributes to the ATP binding site; sequence GPSGSGKS. 4 consecutive transmembrane segments (helical) span residues 267 to 287, 531 to 551, 580 to 600, and 610 to 630; these read GLSM…LALG, IAAI…LVSV, IVVS…FSLL, and VVSA…GIVF.

It belongs to the ABC transporter superfamily. Macrolide exporter (TC 3.A.1.122) family. In terms of assembly, homodimer.

It localises to the cell inner membrane. Non-canonical ABC transporter that contains transmembrane domains (TMD), which form a pore in the inner membrane, and an ATP-binding domain (NBD), which is responsible for energy generation. Confers resistance against macrolides. This chain is Macrolide export ATP-binding/permease protein MacB, found in Bdellovibrio bacteriovorus (strain ATCC 15356 / DSM 50701 / NCIMB 9529 / HD100).